The chain runs to 324 residues: UDP-N-acetylenolpyruvoylglucosamine reductase (324 aa).

In terms of domain architecture, FAD-binding PCMH-type spans 36-211 (FRAGGLAELM…AEDKAKIRND (176 aa)). The active site involves Arg-183. Ser-232 (proton donor) is an active-site residue. Glu-302 is a catalytic residue.

This sequence belongs to the MurB family. The cofactor is FAD.

The protein localises to the cytoplasm. It catalyses the reaction UDP-N-acetyl-alpha-D-muramate + NADP(+) = UDP-N-acetyl-3-O-(1-carboxyvinyl)-alpha-D-glucosamine + NADPH + H(+). The protein operates within cell wall biogenesis; peptidoglycan biosynthesis. Cell wall formation. The polypeptide is UDP-N-acetylenolpyruvoylglucosamine reductase (Sinorhizobium medicae (strain WSM419) (Ensifer medicae)).